Consider the following 38-residue polypeptide: DNA binding protein ORF8 (38 aa).

The protein belongs to the microviridae J protein family.

The protein localises to the virion. The protein resides in the host cytoplasm. In terms of biological role, mediates ssDNA packaging into virion, it locates to the internal surface of the capsid, thereby displacing the internal scaffolding protein during virion formation. Additionally, protein ORF8 plays a role in viral attachment to the host cell. This Spiroplasma melliferum (SpV4) protein is DNA binding protein ORF8.